The primary structure comprises 212 residues: Leucyl/phenylalanyl-tRNA--protein transferase (212 aa).

Belongs to the L/F-transferase family.

The protein resides in the cytoplasm. The enzyme catalyses N-terminal L-lysyl-[protein] + L-leucyl-tRNA(Leu) = N-terminal L-leucyl-L-lysyl-[protein] + tRNA(Leu) + H(+). It catalyses the reaction N-terminal L-arginyl-[protein] + L-leucyl-tRNA(Leu) = N-terminal L-leucyl-L-arginyl-[protein] + tRNA(Leu) + H(+). It carries out the reaction L-phenylalanyl-tRNA(Phe) + an N-terminal L-alpha-aminoacyl-[protein] = an N-terminal L-phenylalanyl-L-alpha-aminoacyl-[protein] + tRNA(Phe). In terms of biological role, functions in the N-end rule pathway of protein degradation where it conjugates Leu, Phe and, less efficiently, Met from aminoacyl-tRNAs to the N-termini of proteins containing an N-terminal arginine or lysine. The sequence is that of Leucyl/phenylalanyl-tRNA--protein transferase from Allorhizobium ampelinum (strain ATCC BAA-846 / DSM 112012 / S4) (Agrobacterium vitis (strain S4)).